We begin with the raw amino-acid sequence, 417 residues long: NADH-quinone oxidoreductase subunit D (417 aa).

The protein belongs to the complex I 49 kDa subunit family. NDH-1 is composed of 14 different subunits. Subunits NuoB, C, D, E, F, and G constitute the peripheral sector of the complex.

Its subcellular location is the cell inner membrane. The enzyme catalyses a quinone + NADH + 5 H(+)(in) = a quinol + NAD(+) + 4 H(+)(out). In terms of biological role, NDH-1 shuttles electrons from NADH, via FMN and iron-sulfur (Fe-S) centers, to quinones in the respiratory chain. The immediate electron acceptor for the enzyme in this species is believed to be ubiquinone. Couples the redox reaction to proton translocation (for every two electrons transferred, four hydrogen ions are translocated across the cytoplasmic membrane), and thus conserves the redox energy in a proton gradient. This chain is NADH-quinone oxidoreductase subunit D, found in Coxiella burnetii (strain RSA 331 / Henzerling II).